The primary structure comprises 255 residues: tRNA pseudouridine synthase A (255 aa).

D43 acts as the Nucleophile in catalysis. Y94 contributes to the substrate binding site.

Belongs to the tRNA pseudouridine synthase TruA family.

It catalyses the reaction uridine(38/39/40) in tRNA = pseudouridine(38/39/40) in tRNA. In terms of biological role, formation of pseudouridine at positions 38, 39 and 40 in the anticodon stem and loop of transfer RNAs. The sequence is that of tRNA pseudouridine synthase A from Pyrobaculum islandicum (strain DSM 4184 / JCM 9189 / GEO3).